Reading from the N-terminus, the 271-residue chain is Regulatory protein RecX (271 aa).

This sequence belongs to the RecX family.

The protein resides in the cytoplasm. In terms of biological role, modulates RecA activity. The chain is Regulatory protein RecX from Geobacillus sp. (strain WCH70).